The chain runs to 527 residues: UDP-glucuronosyltransferase 2A3 (527 aa).

Residues 1–23 (MRSDKSALVFLLLQLFCVGCGFC) form the signal peptide. The Extracellular portion of the chain corresponds to 24–491 (GKVLVWPCDM…TWFQHYSIDV (468 aa)). Asparagine 313 is a glycosylation site (N-linked (GlcNAc...) asparagine). A helical transmembrane segment spans residues 492-512 (IGFLLACVATAIFLFTKCFLF). Topologically, residues 513–527 (SCQKFNKTRKIEKRE) are cytoplasmic.

This sequence belongs to the UDP-glycosyltransferase family.

It localises to the membrane. It catalyses the reaction glucuronate acceptor + UDP-alpha-D-glucuronate = acceptor beta-D-glucuronoside + UDP + H(+). Its function is as follows. UDP-glucuronosyltransferases catalyze phase II biotransformation reactions in which lipophilic substrates are conjugated with glucuronic acid to increase water solubility and enhance excretion. They are of major importance in the conjugation and subsequent elimination of potentially toxic xenobiotics and endogenous compounds. The protein is UDP-glucuronosyltransferase 2A3 (UGT2A3) of Homo sapiens (Human).